We begin with the raw amino-acid sequence, 162 residues long: Ribonuclease (162 aa).

The N-terminal stretch at 1–29 is a signal peptide; that stretch reads MKKISSVFTMFALIAAILFSGFIPQQAYA. The propeptide occupies 30–53; the sequence is ETTLTPTATNKTASIQLTSDVHTL. Catalysis depends on glutamate 125, which acts as the Proton acceptor. The Proton donor role is filled by histidine 154.

Belongs to the ribonuclease N1/T1 family.

It is found in the secreted. Functionally, this is a purine-specific ribonuclease. The chain is Ribonuclease from Bacillus pumilus (Bacillus mesentericus).